Consider the following 381-residue polypeptide: Chorismate synthase (381 aa).

NADP(+) contacts are provided by Arg39 and Arg45. FMN-binding positions include 127–129 (RAS), 248–249 (QS), Gly293, 308–312 (KPIPT), and Arg334.

The protein belongs to the chorismate synthase family. In terms of assembly, homotetramer. FMNH2 is required as a cofactor.

It carries out the reaction 5-O-(1-carboxyvinyl)-3-phosphoshikimate = chorismate + phosphate. Its pathway is metabolic intermediate biosynthesis; chorismate biosynthesis; chorismate from D-erythrose 4-phosphate and phosphoenolpyruvate: step 7/7. Functionally, catalyzes the anti-1,4-elimination of the C-3 phosphate and the C-6 proR hydrogen from 5-enolpyruvylshikimate-3-phosphate (EPSP) to yield chorismate, which is the branch point compound that serves as the starting substrate for the three terminal pathways of aromatic amino acid biosynthesis. This reaction introduces a second double bond into the aromatic ring system. The sequence is that of Chorismate synthase from Caldicellulosiruptor saccharolyticus (strain ATCC 43494 / DSM 8903 / Tp8T 6331).